The sequence spans 287 residues: U1 small nuclear ribonucleoprotein A (287 aa).

The RRM 1 domain occupies His16 to Thr95. N6-acetyllysine is present on Lys66. Residues Thr106 to Gly134 are disordered. Over residues Pro125 to Gly134 the composition is skewed to low complexity. Residue Arg157 is modified to Omega-N-methylarginine. Positions His213–Lys287 constitute an RRM 2 domain.

The protein belongs to the RRM U1 A/B'' family. U1 snRNP is composed of the 7 core Sm proteins SNRPB, SNRPD1, SNRPD2, SNRPD3, SNRPE, SNRPF and SNRPG that assemble in a heptameric protein ring on the Sm site of the small nuclear RNA to form the core snRNP, and at least three U1 snRNP-specific proteins SNRNP70/U1-70K, SNRPA/U1-A and SNRPC/U1-C. Interacts with SFPQ; component of a snRNP-free complex with SFPQ. Interacts with IVNS1ABP (via BACK domain); the interaction is indirect.

Its subcellular location is the nucleus. Its function is as follows. Component of the spliceosomal U1 snRNP, which is essential for recognition of the pre-mRNA 5' splice-site and the subsequent assembly of the spliceosome. U1 snRNP is the first snRNP to interact with pre-mRNA. This interaction is required for the subsequent binding of U2 snRNP and the U4/U6/U5 tri-snRNP. SNRPA binds stem loop II of U1 snRNA. In a snRNP-free form (SF-A) may be involved in coupled pre-mRNA splicing and polyadenylation process. May bind preferentially to the 5'-UGCAC-3' motif on RNAs. This Mus musculus (Mouse) protein is U1 small nuclear ribonucleoprotein A (Snrpa).